Reading from the N-terminus, the 214-residue chain is Pyrrolidone-carboxylate peptidase (214 aa).

Catalysis depends on residues glutamate 78, cysteine 141, and histidine 165.

Belongs to the peptidase C15 family. Homotetramer.

The protein resides in the cytoplasm. It carries out the reaction Release of an N-terminal pyroglutamyl group from a polypeptide, the second amino acid generally not being Pro.. In terms of biological role, removes 5-oxoproline from various penultimate amino acid residues except L-proline. The chain is Pyrrolidone-carboxylate peptidase from Streptococcus pneumoniae serotype 2 (strain D39 / NCTC 7466).